The primary structure comprises 152 residues: UPF0225 protein YchJ (152 aa).

Belongs to the UPF0225 family.

This Escherichia coli O17:K52:H18 (strain UMN026 / ExPEC) protein is UPF0225 protein YchJ.